The sequence spans 464 residues: Glutamate--tRNA ligase (464 aa).

The 'HIGH' region motif lies at 9–19 (PSPTGYLHIGG). A 'KMSKS' region motif is present at residues 242-246 (KISKR). Residue Lys245 participates in ATP binding.

The protein belongs to the class-I aminoacyl-tRNA synthetase family. Glutamate--tRNA ligase type 1 subfamily. Monomer.

The protein localises to the cytoplasm. It carries out the reaction tRNA(Glu) + L-glutamate + ATP = L-glutamyl-tRNA(Glu) + AMP + diphosphate. Its function is as follows. Catalyzes the attachment of glutamate to tRNA(Glu) in a two-step reaction: glutamate is first activated by ATP to form Glu-AMP and then transferred to the acceptor end of tRNA(Glu). This is Glutamate--tRNA ligase from Neisseria meningitidis serogroup C / serotype 2a (strain ATCC 700532 / DSM 15464 / FAM18).